Reading from the N-terminus, the 596-residue chain is Arginine--tRNA ligase (596 aa).

Positions 128–138 (ANPTSSLHVGH) match the 'HIGH' region motif.

Belongs to the class-I aminoacyl-tRNA synthetase family. Monomer.

It is found in the cytoplasm. The enzyme catalyses tRNA(Arg) + L-arginine + ATP = L-arginyl-tRNA(Arg) + AMP + diphosphate. This Acinetobacter baumannii (strain AB307-0294) protein is Arginine--tRNA ligase.